The primary structure comprises 305 residues: Dihydroorotate dehydrogenase B (NAD(+)), catalytic subunit (305 aa).

Residues S21 and 45-46 (KG) each bind FMN. Substrate is bound by residues K45 and 69-73 (NAVGL). FMN contacts are provided by N99 and N127. A substrate-binding site is contributed by N127. The active-site Nucleophile is the C130. K165 and I191 together coordinate FMN. 192 to 193 (NT) is a substrate binding site. FMN contacts are provided by residues G217, 243–244 (GG), and 265–266 (GT).

The protein belongs to the dihydroorotate dehydrogenase family. Type 1 subfamily. In terms of assembly, heterotetramer of 2 PyrK and 2 PyrD type B subunits. FMN is required as a cofactor.

Its subcellular location is the cytoplasm. The catalysed reaction is (S)-dihydroorotate + NAD(+) = orotate + NADH + H(+). It functions in the pathway pyrimidine metabolism; UMP biosynthesis via de novo pathway; orotate from (S)-dihydroorotate (NAD(+) route): step 1/1. Catalyzes the conversion of dihydroorotate to orotate with NAD(+) as electron acceptor. The protein is Dihydroorotate dehydrogenase B (NAD(+)), catalytic subunit (pyrD) of Parabacteroides distasonis (strain ATCC 8503 / DSM 20701 / CIP 104284 / JCM 5825 / NCTC 11152).